Here is a 225-residue protein sequence, read N- to C-terminus: uncharacterized protein (225 aa).

It belongs to the mimivirus L31/R44 family.

This is an uncharacterized protein from Acanthamoeba polyphaga (Amoeba).